Reading from the N-terminus, the 96-residue chain is Citrate lyase acyl carrier protein (96 aa).

Ser-14 carries the post-translational modification O-(phosphoribosyl dephospho-coenzyme A)serine.

The protein belongs to the CitD family. In terms of assembly, oligomer with a subunit composition of (alpha,beta,gamma)6.

It is found in the cytoplasm. Its function is as follows. Covalent carrier of the coenzyme of citrate lyase. The polypeptide is Citrate lyase acyl carrier protein (Pectobacterium carotovorum subsp. carotovorum (strain PC1)).